The primary structure comprises 207 residues: Phenazine biosynthesis protein PhzD (207 aa).

The active-site Proton donor is aspartate 38. Residues glutamine 78, arginine 87, lysine 122, and 151-155 (YAHVG) contribute to the substrate site.

It belongs to the isochorismatase family. As to quaternary structure, homodimer.

The catalysed reaction is (2S)-2-amino-4-deoxychorismate + H2O = (5S,6S)-6-amino-5-hydroxycyclohexa-1,3-diene-1-carboxyate + pyruvate. The protein operates within antibiotic biosynthesis; phenazine biosynthesis. Involved in the biosynthesis of the antibiotic phenazine, a nitrogen-containing heterocyclic molecule having important roles in virulence, competition and biological control. Catalyzes the hydrolysis of the vinyl ether functional group of 2-amino-2-deoxyisochorismate (ADIC), yielding pyruvate and trans-2,3-dihydro-3-hydroxyanthranilic acid (DHHA). This is Phenazine biosynthesis protein PhzD from Pseudomonas fluorescens.